A 505-amino-acid chain; its full sequence is MASPAMVPLRQLFVDGEWRPPAQGRRLPVVNPTTEAHIGEIPAGTAEDVDAAVAAARAALKRNRGRDWARAPGAVRAKYLRAIAAKVIERKPELAKLEALDCGKPYDEAAWDMDDVAGCFEYFADQAEALDKRQNSPVSLPMETFKCHLRREPIGVVGLITPWNYPLLMATWKIAPALAAGCTAVLKPSELASVTCLELADICKEVGLPSGVLNIVTGLGPDAGAPLSAHPDVDKVAFTGSFETGKKIMASAAPMVKPVTLELGGKSPIVVFDDVDIDKAVEWTLFGCFWTNGQICSATSRLLIHTKIAKKFNERMVAWAKNIKVSDPLEEGCRLGPVVSEGQYEKIKKFISNAKSQGATILTGGVRPAHLEKGFFIEPTIITDITTSMEIWREEVFGPVLCVKEFSTEDEAIELANDTQYGLAGAVISGDRERCQRLSEEIDAGCIWVNCSQPCFCQAPWGGNKRSGFGRELGEGGIDNYLSVKQVTEYISDEPWGWYQSPSKL.

Residue aspartate 101 participates in Na(+) binding. NAD(+)-binding positions include 161–163 (TPW) and 187–190 (KPSE). Leucine 191 is a binding site for Na(+). NAD(+) is bound by residues 241–244 (SFET) and glutamate 262. Residue glutamate 262 is the Proton acceptor of the active site. The active-site Nucleophile is cysteine 296. Glutamate 395 and tryptophan 461 together coordinate NAD(+).

The protein belongs to the aldehyde dehydrogenase family. Forms homodimers.

It carries out the reaction 4-aminobutanal + NAD(+) + H2O = 4-aminobutanoate + NADH + 2 H(+). The enzyme catalyses 3-aminopropanal + NAD(+) + H2O = beta-alanine + NADH + 2 H(+). It catalyses the reaction 4-(trimethylamino)butanal + NAD(+) + H2O = 4-(trimethylamino)butanoate + NADH + 2 H(+). The catalysed reaction is 4-guanidinobutanal + NAD(+) + H2O = 4-guanidinobutanoate + NADH + 2 H(+). It carries out the reaction betaine aldehyde + NAD(+) + H2O = glycine betaine + NADH + 2 H(+). It participates in amine and polyamine biosynthesis; betaine biosynthesis via choline pathway; betaine from betaine aldehyde: step 1/1. Dehydrogenase that catalyzes the oxidation of several aminoaldehydes. Metabolizes and detoxifies aldehyde products of polyamine degradation to non-toxic amino acids. Catalyzes the oxidation of 4-aminobutanal and 3-aminopropanal to 4-aminobutanoate and beta-alanine, respectively. Catalyzes the oxidation of 4-(trimethylamino)butanal and 4-guanidinobutanal to 4-trimethylammoniobutanoate and 4-guanidinobutanoate, respectively. Catalyzes the oxidation of betaine aldehyde to glycine betaine. Its function is as follows. Dehydrogenase that catalyzes the oxidation of several aminoaldehydes. Catalyzes the oxidation of betaine aldehyde to glycine betaine. Catalyzes the oxidation of 4-(trimethylamino)butanal to 4-trimethylammoniobutanoate. This Zea mays (Maize) protein is Aminoaldehyde dehydrogenase 1a.